Reading from the N-terminus, the 182-residue chain is MTQENQTPPPEQENLAADPAVETTAETPAVKTPEQEVAELNQKIGELQDNFLRAKAEGENIRRRAVEDIAKAHKFAIESFAEHLVPVTDSLYAALNTDAGDAKAFKEGLEITLKQLLSAFEKGRMTEINPAVGDKFDPHHHQAIASVPSEQESNTVVSVLQRGYTVADRVLRPALVTVSAPK.

Positions 1 to 35 are disordered; it reads MTQENQTPPPEQENLAADPAVETTAETPAVKTPEQ.

The protein belongs to the GrpE family. In terms of assembly, homodimer.

The protein resides in the cytoplasm. Functionally, participates actively in the response to hyperosmotic and heat shock by preventing the aggregation of stress-denatured proteins, in association with DnaK and GrpE. It is the nucleotide exchange factor for DnaK and may function as a thermosensor. Unfolded proteins bind initially to DnaJ; upon interaction with the DnaJ-bound protein, DnaK hydrolyzes its bound ATP, resulting in the formation of a stable complex. GrpE releases ADP from DnaK; ATP binding to DnaK triggers the release of the substrate protein, thus completing the reaction cycle. Several rounds of ATP-dependent interactions between DnaJ, DnaK and GrpE are required for fully efficient folding. The polypeptide is Protein GrpE (Polynucleobacter necessarius subsp. necessarius (strain STIR1)).